Here is a 631-residue protein sequence, read N- to C-terminus: MATWNRPHPRLPVAPEPVAEGESQQPLGRELSEANRFAYAALCGISLSQLFPEPEQSSFCSEFVTGLVKWLHLSETVLPTMMAFASGLGGKGDDIFAQTLLKDPILKDNPSAISQDLLSFSLKDGHYDARARVLVCHVISLLQVPMEELDILEEVFLESLKDAKEEESETAEESRKRKEKRRKWKRYLLIGLATVGGGTVIGVTGGLAAPLVAAGAATIIGSAGAAALGSVAGIAVMTSLFGAAGAGLTGYKMKKRVGAIEEFMFLPLTDGKQLHITIAITGWLGSGRYRTFNAPWMALARSQEQYCLAWEAKYLMELGNALETILSGLANMVAQEALKYTVLSGIVAALTLPASLLSVANVIDNPWGVCLHRSAEVGKHLAHILLSRQQGRRPVTLIGFSLGARVIYFCLQEMAQEQDCQGIIEDVVLLGAPVEGDPKYWEPFRNVVSGRIINGYCRGDWLLSFVYRTSSVQLRVAGLQPVLLQDRRMENVDLSSVVNGHLDYAKKMDVILKAVGIRTKPGWSEKGLPLAPGGLPQEEPLQPATVSTDETIHQDEQKQGPAPGDSLKSAIPSSASQAQVPAGLDQSTEDSLPAAAAPAEGHLVCSHGVGPNPLGCPDCTRETQESCAELD.

The tract at residues 1–26 (MATWNRPHPRLPVAPEPVAEGESQQP) is disordered. A coiled-coil region spans residues 153–183 (EEVFLESLKDAKEEESETAEESRKRKEKRRK). 4 consecutive transmembrane segments (helical) span residues 187 to 203 (YLLI…VIGV), 204 to 220 (TGGL…ATII), 228 to 248 (LGSV…GAGL), and 343 to 363 (LSGI…ANVI). The interval 523 to 631 (WSEKGLPLAP…ETQESCAELD (109 aa)) is disordered. Over residues 571–590 (IPSSASQAQVPAGLDQSTED) the composition is skewed to polar residues.

This sequence belongs to the TMCO4 family.

Its subcellular location is the membrane. The chain is Transmembrane and coiled-coil domain-containing protein 4 (Tmco4) from Rattus norvegicus (Rat).